Consider the following 333-residue polypeptide: Phosphate acetyltransferase (333 aa).

The protein belongs to the phosphate acetyltransferase and butyryltransferase family.

It is found in the cytoplasm. The enzyme catalyses acetyl-CoA + phosphate = acetyl phosphate + CoA. It functions in the pathway metabolic intermediate biosynthesis; acetyl-CoA biosynthesis; acetyl-CoA from acetate: step 2/2. The polypeptide is Phosphate acetyltransferase (pta) (Clostridium acetobutylicum (strain ATCC 824 / DSM 792 / JCM 1419 / IAM 19013 / LMG 5710 / NBRC 13948 / NRRL B-527 / VKM B-1787 / 2291 / W)).